The primary structure comprises 67 residues: Brevinin-1CDYa (67 aa).

Positions 1–22 are cleaved as a signal peptide; it reads MFTLKKSLLLIFFLGTINLSLC. A propeptide spanning residues 23-45 is cleaved from the precursor; that stretch reads EEERNADEEERRDDLEERDVEVE. An intrachain disulfide couples Cys-61 to Cys-67.

This sequence belongs to the frog skin active peptide (FSAP) family. Brevinin subfamily. As to expression, expressed by the skin glands.

It is found in the secreted. Antimicrobial peptide. Has low activity against the Gram-positive bacterium S.aureus (MIC=12.5 uM) and the Gram-negative bacterium E.coli (MIC=25 uM). Has weak hemolytic activity against human erythrocytes. This is Brevinin-1CDYa from Rana dybowskii (Dybovsky's frog).